Consider the following 385-residue polypeptide: Cytochrome b (385 aa).

A run of 4 helical transmembrane segments spans residues 32–52, 76–98, 113–133, and 179–199; these read LGSLLGLCLVIQILTGIFMAM, WLLRYMHANGASFFFICMYMHIA, VWIVGVIIFVLTMAAAFLGYC, and FFALHYLVPFIIAALVVMHFM. Heme b contacts are provided by His-82 and His-96. The heme b site is built by His-183 and His-197. Position 202 (His-202) interacts with a ubiquinone. 4 helical membrane-spanning segments follow: residues 225–245, 289–309, 321–341, and 348–368; these read FIFKDLITVFVFLIFFSLFVF, LLGVITMFAAILVLLVLPITD, LSKFFFFLFIFNFLLLGQIGQ, and FVLMGQIATFLYFAYFIIIVP.

It belongs to the cytochrome b family. Fungal cytochrome b-c1 complex contains 10 subunits; 3 respiratory subunits, 2 core proteins and 5 low-molecular weight proteins. Cytochrome b-c1 complex is a homodimer. The cofactor is heme b.

The protein localises to the mitochondrion inner membrane. Its function is as follows. Component of the ubiquinol-cytochrome c reductase complex (complex III or cytochrome b-c1 complex) that is part of the mitochondrial respiratory chain. The b-c1 complex mediates electron transfer from ubiquinol to cytochrome c. Contributes to the generation of a proton gradient across the mitochondrial membrane that is then used for ATP synthesis. The polypeptide is Cytochrome b (COB) (Candida glabrata (strain ATCC 2001 / BCRC 20586 / JCM 3761 / NBRC 0622 / NRRL Y-65 / CBS 138) (Yeast)).